Consider the following 648-residue polypeptide: 1-deoxy-D-xylulose-5-phosphate synthase (648 aa).

Residues His74 and 115-117 each bind thiamine diphosphate; that span reads GHA. Asp146 provides a ligand contact to Mg(2+). Thiamine diphosphate-binding positions include 147–148, Asn176, Tyr292, and Glu375; that span reads GA. Asn176 is a Mg(2+) binding site.

This sequence belongs to the transketolase family. DXPS subfamily. Homodimer. Mg(2+) is required as a cofactor. Thiamine diphosphate serves as cofactor.

It catalyses the reaction D-glyceraldehyde 3-phosphate + pyruvate + H(+) = 1-deoxy-D-xylulose 5-phosphate + CO2. It functions in the pathway metabolic intermediate biosynthesis; 1-deoxy-D-xylulose 5-phosphate biosynthesis; 1-deoxy-D-xylulose 5-phosphate from D-glyceraldehyde 3-phosphate and pyruvate: step 1/1. Functionally, catalyzes the acyloin condensation reaction between C atoms 2 and 3 of pyruvate and glyceraldehyde 3-phosphate to yield 1-deoxy-D-xylulose-5-phosphate (DXP). This Synechococcus sp. (strain JA-2-3B'a(2-13)) (Cyanobacteria bacterium Yellowstone B-Prime) protein is 1-deoxy-D-xylulose-5-phosphate synthase.